A 263-amino-acid chain; its full sequence is Indole-3-glycerol phosphate synthase (263 aa).

This sequence belongs to the TrpC family.

The enzyme catalyses 1-(2-carboxyphenylamino)-1-deoxy-D-ribulose 5-phosphate + H(+) = (1S,2R)-1-C-(indol-3-yl)glycerol 3-phosphate + CO2 + H2O. It participates in amino-acid biosynthesis; L-tryptophan biosynthesis; L-tryptophan from chorismate: step 4/5. The polypeptide is Indole-3-glycerol phosphate synthase (Laribacter hongkongensis (strain HLHK9)).